A 133-amino-acid chain; its full sequence is L-cystatin (133 aa).

A signal peptide spans 1 to 19 (MEGYNILAVLIILVGVSMG). Position 20 is a pyrrolidone carboxylic acid (Q20). The Secondary area of contact signature appears at 67–71 (QVVSG). Cystine bridges form between C85–C98 and C109–C129.

This sequence belongs to the cystatin family. As to expression, expressed in hemocytes and slightly in heart.

The protein localises to the cytoplasmic granule. In terms of biological role, tight-binding inhibitor for papain. It has an important role in the protection of cells, antimicrobial activity against Gram-negative bacteria, defense against invading microbes, and response to external stimuli. The polypeptide is L-cystatin (Tachypleus tridentatus (Japanese horseshoe crab)).